A 322-amino-acid polypeptide reads, in one-letter code: CPX chromosomal region candidate gene 1 protein homolog (322 aa).

2 stretches are compositionally biased toward polar residues: residues 1 to 23 (MTSS…NETP) and 37 to 78 (TNIS…TQND). Residues 1–83 (MTSSNQGNDP…MTQNDPPDEE (83 aa)) are disordered.

In Mus musculus (Mouse), this protein is CPX chromosomal region candidate gene 1 protein homolog (Cpxcr1).